The following is a 371-amino-acid chain: 2-oxoadipate dioxygenase/decarboxylase, chloroplastic (371 aa).

The N-terminal 50 residues, methionine 1–serine 50, are a transit peptide targeting the chloroplast. Residues histidine 113 and arginine 117 each coordinate 2-oxoadipate. Histidine 113 serves as a coordination point for Fe(2+). Histidine 250 is a binding site for Fe(2+). 2 residues coordinate 2-oxoadipate: glutamine 296 and tyrosine 320. Position 322 (glutamate 322) interacts with Fe(2+).

Belongs to the 2-oxoadipate dioxygenase/decarboxylase family. Requires Fe(2+) as cofactor.

It localises to the plastid. It is found in the chloroplast. It catalyses the reaction 2-oxoadipate + O2 = (R)-2-hydroxyglutarate + CO2. It functions in the pathway amino-acid degradation. Its function is as follows. Catalyzes the decarboxylation and hydroxylation of 2-oxoadipate (2OA) to form D-2-hydroxyglutarate (D-2-HGA). Is involved in a D-lysine catabolic pathway. The chain is 2-oxoadipate dioxygenase/decarboxylase, chloroplastic from Arabidopsis thaliana (Mouse-ear cress).